A 377-amino-acid polypeptide reads, in one-letter code: 3-dehydroquinate synthase (377 aa).

Residues 115–119, 139–140, lysine 152, and lysine 161 contribute to the NAD(+) site; these read GVIGD and TS. Zn(2+) contacts are provided by glutamate 194, histidine 256, and histidine 275.

This sequence belongs to the sugar phosphate cyclases superfamily. Dehydroquinate synthase family. Requires NAD(+) as cofactor. Co(2+) serves as cofactor. Zn(2+) is required as a cofactor.

Its subcellular location is the cytoplasm. It catalyses the reaction 7-phospho-2-dehydro-3-deoxy-D-arabino-heptonate = 3-dehydroquinate + phosphate. The protein operates within metabolic intermediate biosynthesis; chorismate biosynthesis; chorismate from D-erythrose 4-phosphate and phosphoenolpyruvate: step 2/7. Functionally, catalyzes the conversion of 3-deoxy-D-arabino-heptulosonate 7-phosphate (DAHP) to dehydroquinate (DHQ). This is 3-dehydroquinate synthase from Rhizobium meliloti (strain 1021) (Ensifer meliloti).